The primary structure comprises 310 residues: tRNA-5-methyluridine(54) 2-sulfurtransferase (310 aa).

4 residues coordinate Zn(2+): Cys-3, Cys-6, Cys-22, and His-25. The ATP site is built by Ala-53 and Ile-79. Cys-128 and Cys-131 together coordinate [4Fe-4S] cluster. Cys-128 and Cys-220 are disulfide-bonded. Residues Lys-135 and Gly-154 each coordinate ATP. A [4Fe-4S] cluster-binding site is contributed by Cys-220. Positions 272, 275, 284, and 287 each coordinate Zn(2+).

Belongs to the TtcA family. TtuA subfamily. In terms of assembly, homodimer. It depends on [4Fe-4S] cluster as a cofactor. Mg(2+) serves as cofactor.

The catalysed reaction is 5-methyluridine(54) in tRNA + hydrogen sulfide + ATP = 5-methyl-2-thiouridine(54) in tRNA + AMP + diphosphate. The protein operates within tRNA modification. Catalyzes the ATP-dependent 2-thiolation of 5-methyluridine residue at position 54 in the T loop of tRNAs, leading to 5-methyl-2-thiouridine (m(5)s(2)U or s(2)T). This modification allows thermal stabilization of tRNAs in thermophilic microorganisms, and is required for cell growth at high temperatures. Can use free sulfide as sulfur source in vitro, which may be also the sulfur source in vivo. The polypeptide is tRNA-5-methyluridine(54) 2-sulfurtransferase (Pyrococcus horikoshii (strain ATCC 700860 / DSM 12428 / JCM 9974 / NBRC 100139 / OT-3)).